A 381-amino-acid polypeptide reads, in one-letter code: Arogenate dehydratase/prephenate dehydratase 2, chloroplastic (381 aa).

The segment at 1–32 is disordered; sequence MAMHTVRLSPATQLHGGISSNLSPPNRKPNNS. A chloroplast-targeting transit peptide spans 1–66; the sequence is MAMHTVRLSP…DANGRDNSVR (66 aa). Residues 18 to 32 show a composition bias toward polar residues; the sequence is ISSNLSPPNRKPNNS. One can recognise a Prephenate dehydratase domain in the interval 100–275; it reads RVAYQGVRGA…NVTRFLMLAR (176 aa). Positions 289 to 375 constitute an ACT domain; that stretch reads SIVFSLEEGP…TFLRVLGSYP (87 aa).

Expressed in roots, leaves, stems, flowers and siliques. Most abundant in leaves and seeds.

Its subcellular location is the plastid. The protein resides in the chloroplast stroma. The enzyme catalyses L-arogenate + H(+) = L-phenylalanine + CO2 + H2O. It carries out the reaction prephenate + H(+) = 3-phenylpyruvate + CO2 + H2O. The protein operates within amino-acid biosynthesis; L-phenylalanine biosynthesis; L-phenylalanine from L-arogenate: step 1/1. It functions in the pathway amino-acid biosynthesis; L-phenylalanine biosynthesis; phenylpyruvate from prephenate: step 1/1. In terms of biological role, converts the prephenate produced from the shikimate-chorismate pathway into phenylalanine. Dehydratase that uses arogenate and prephenate as substrates. Utilzes more efficiently arogenate than prephenate. Required for chloroplast division prior to ARC5, but in an ARC3- and ARC6-dependent manner, especially involved in the Z-ring formation. The polypeptide is Arogenate dehydratase/prephenate dehydratase 2, chloroplastic (Arabidopsis thaliana (Mouse-ear cress)).